Here is a 607-residue protein sequence, read N- to C-terminus: ATP-dependent RNA helicase-like protein DB10 (607 aa).

A compositionally biased stretch (polar residues) spans 1-10 (MAVVTASSAG). Disordered stretches follow at residues 1–25 (MAVV…KPWK) and 66–108 (VFVS…DGTS). Positions 18–52 (PTLPKPWKGLVDGTTGFIYFWNPETNDTQYERPVP) constitute a WW domain. Residues 89–98 (RGSNNKIARS) show a composition bias toward polar residues. A compositionally biased stretch (basic and acidic residues) spans 99–108 (SSDRFHDGTS). Residues 145-173 (TSFEATGFPSEIVREMHQAGFSAPTPIQA) carry the Q motif motif. The Helicase ATP-binding domain occupies 176 to 350 (WPIALQGRDI…ADLLVNSVQV (175 aa)). Position 189–196 (189–196 (AKTGSGKT)) interacts with ATP. The DEAD box signature appears at 298–301 (DEAD). The region spanning 379 to 523 (RVEQILRSKE…CVPTELRDMA (145 aa)) is the Helicase C-terminal domain. The tract at residues 519 to 607 (LRDMASRGGG…WSGKKSRFTD (89 aa)) is disordered. Residues 538–548 (SGPGGRGGRGG) are compositionally biased toward gly residues. Residues 562–574 (GYDRGSRDSDRYG) show a composition bias toward basic and acidic residues.

It belongs to the DEAD box helicase family.

It carries out the reaction ATP + H2O = ADP + phosphate + H(+). This chain is ATP-dependent RNA helicase-like protein DB10, found in Nicotiana sylvestris (Wood tobacco).